Reading from the N-terminus, the 373-residue chain is Chloroperoxidase (373 aa).

A signal peptide spans 1–20 (MFSKVLPFVGAVAALPHSVR). Glutamine 21 is modified (pyrrolidone carboxylic acid). Asparagine 33 is a glycosylation site (N-linked (GlcNAc...) asparagine). Cysteine 50 lines the heme pocket. A disulfide bridge connects residues cysteine 100 and cysteine 108. Asparagine 114 is a glycosylation site (N-linked (GlcNAc...) asparagine). Mn(2+) contacts are provided by glutamate 125, histidine 126, and serine 129. The active site involves glutamate 204. Asparagine 237 is a glycosylation site (N-linked (GlcNAc...) asparagine). O-linked (Man) threonine glycosylation is present at threonine 259. 4 O-linked (Man) serine glycosylation sites follow: serine 260, serine 262, serine 263, and serine 269. Threonine 271 carries O-linked (Man) threonine glycosylation. O-linked (Man) serine glycosylation is present at serine 272. Threonine 273 is a glycosylation site (O-linked (Man) threonine). 3 O-linked (Man...) threonine glycosylation sites follow: threonine 296, threonine 304, and threonine 314. The propeptide occupies 322–373 (EAAPAATTSMAVFKNPYLEAIGTQDIKNQQAYVSSKAAAMASAMAANKARNL).

The protein belongs to the chloroperoxidase family. It depends on heme b as a cofactor. The cofactor is Mn(2+). Post-translationally, N- and O-glycosylated.

The catalysed reaction is RH + Cl(-) + H2O2 = RCl + 2 H2O.. In terms of biological role, catalyzes peroxidative halogenations involved in the biosynthesis of clardariomycin (2,2-dichloro-1,3-cyclo-pentenedione). The enzyme also has potent catalase activity and in the absence of halide ion, acts as a peroxidase similar to plant peroxidases. This chain is Chloroperoxidase (CPO), found in Leptoxyphium fumago (Caldariomyces fumago).